The following is a 1088-amino-acid chain: Pathogenesis-related homeodomain protein (1088 aa).

Repeat copies occupy residues 140 to 152 (INMG…PEEV), 173 to 199 (NSYQ…RSDD), 205 to 239 (GLVE…KVQT), 240 to 274 (GLEQ…KVQN), 283 to 295 (INME…PEQV), 316 to 342 (NSDQ…QSDD), 348 to 382 (GFKE…KVQT), and 383 to 417 (GLEQ…KVQD). Residues 140 to 295 (INMGQKETMP…EQKETIPEQV (156 aa)) are 2 X 13 AA repeats. The 2 X 27 AA approximate repeats stretch occupies residues 173–342 (NSYQSGLPPE…HAQFGHQSDD (170 aa)). The segment at 205–274 (GLVELVIGQK…SRGRPRKVQN (70 aa)) is 2 X 35 AA approximate tandem repeats (type C). Residues 220 to 282 (PSQLVETGKR…QNSPTSFLEN (63 aa)) form a disordered region. 2 consecutive DNA-binding regions (a.T hook) follow at residues 226-236 (TGKRGRGRPRK) and 261-271 (TGKRSRGRPRK). Residues 272 to 282 (VQNSPTSFLEN) show a composition bias toward polar residues. Over residues 303-320 (SLTIPTDNQSRTYNSDQS) the composition is skewed to polar residues. Disordered regions lie at residues 303 to 343 (SLTI…SDDT) and 363 to 484 (PSQL…RMEE). The segment at 348 to 417 (GFKELVIGQE…SRGRPRKVQD (70 aa)) is 2 X 35 AA approximate tandem repeats (type C). DNA-binding regions (a.T hook) lie at residues 369 to 379 (AGKRGRGRPRK) and 404 to 414 (TGKRSRGRPRK). The PHD-type zinc finger occupies 578 to 635 (DIFCAKCGSKDVTLSNDIILCDGACDRGFHQFCLDPPLLKEYIPPDDEGWLCPGCECK). Disordered stretches follow at residues 667 to 810 (AASG…PLYP) and 851 to 901 (EEYG…ARES). A 4-1 repeat occupies 678-693 (GLPSDDSEDDDYDPGG). The interval 678–744 (GLPSDDSEDD…SEDDEYDPSG (67 aa)) is 2 X 16 AA Asp/Glu-rich (acidic) repeats. Acidic residues predominate over residues 705–718 (SSTDESDYQSESDD). The 4-2 repeat unit spans residues 729 to 744 (GLPSDDSEDDEYDPSG). 2 stretches are compositionally biased toward basic and acidic residues: residues 788–802 (DHVR…HPEQ) and 874–901 (NNSD…ARES). Positions 935–994 (KSTSKTLHGEHATQRLLQSFKENQYPQRAVKESLAAELALSVRQVSNWFNNRRWSFRHSS) form a DNA-binding region, homeobox.

It belongs to the PHD-associated homeobox family.

It localises to the nucleus. Its function is as follows. Specifically binds to the fungal elicitor-responsive DNA element, 5'-CTAATTGTTTA-3', of the gene PR2 promoter. In Petroselinum crispum (Parsley), this protein is Pathogenesis-related homeodomain protein (PRH).